Here is a 116-residue protein sequence, read N- to C-terminus: Non-specific lipid-transfer protein D, cotyledon-specific isoform (116 aa).

An N-terminal signal peptide occupies residues 1–24 (MKNIFFSVFFLLSFLLCLANVSEA). Disulfide bonds link C28-C76, C38-C53, C54-C98, and C74-C112.

Belongs to the plant LTP family.

In terms of biological role, plant non-specific lipid-transfer proteins transfer phospholipids as well as galactolipids across membranes. May play a role in wax or cutin deposition in the cell walls of expanding epidermal cells and certain secretory tissues. The chain is Non-specific lipid-transfer protein D, cotyledon-specific isoform from Ricinus communis (Castor bean).